The primary structure comprises 288 residues: Shikimate dehydrogenase (NADP(+)) (288 aa).

Shikimate-binding positions include 14–16 (SIS) and threonine 63. The active-site Proton acceptor is lysine 67. Glutamate 79 serves as a coordination point for NADP(+). Shikimate contacts are provided by asparagine 88 and aspartate 103. Residues 127–131 (GSGGA), 151–156 (NRTYEK), and methionine 219 each bind NADP(+). Position 221 (tyrosine 221) interacts with shikimate. Glycine 242 is a binding site for NADP(+).

The protein belongs to the shikimate dehydrogenase family. As to quaternary structure, homodimer.

It carries out the reaction shikimate + NADP(+) = 3-dehydroshikimate + NADPH + H(+). It functions in the pathway metabolic intermediate biosynthesis; chorismate biosynthesis; chorismate from D-erythrose 4-phosphate and phosphoenolpyruvate: step 4/7. Involved in the biosynthesis of the chorismate, which leads to the biosynthesis of aromatic amino acids. Catalyzes the reversible NADPH linked reduction of 3-dehydroshikimate (DHSA) to yield shikimate (SA). This is Shikimate dehydrogenase (NADP(+)) from Caldicellulosiruptor bescii (strain ATCC BAA-1888 / DSM 6725 / KCTC 15123 / Z-1320) (Anaerocellum thermophilum).